The following is a 182-amino-acid chain: Large ribosomal subunit protein uL10 (182 aa).

It belongs to the universal ribosomal protein uL10 family. Part of the ribosomal stalk of the 50S ribosomal subunit. The N-terminus interacts with L11 and the large rRNA to form the base of the stalk. The C-terminus forms an elongated spine to which L12 dimers bind in a sequential fashion forming a multimeric L10(L12)X complex.

In terms of biological role, forms part of the ribosomal stalk, playing a central role in the interaction of the ribosome with GTP-bound translation factors. The polypeptide is Large ribosomal subunit protein uL10 (Leptothrix cholodnii (strain ATCC 51168 / LMG 8142 / SP-6) (Leptothrix discophora (strain SP-6))).